The chain runs to 359 residues: Membrane-bound lytic murein transglycosylase C (359 aa).

A signal peptide spans 1 to 16 (MKKYLALALIAPLLIS). The N-palmitoyl cysteine moiety is linked to residue Cys-17. A lipid anchor (S-diacylglycerol cysteine) is attached at Cys-17.

The protein belongs to the transglycosylase Slt family.

It localises to the cell outer membrane. It carries out the reaction Exolytic cleavage of the (1-&gt;4)-beta-glycosidic linkage between N-acetylmuramic acid (MurNAc) and N-acetylglucosamine (GlcNAc) residues in peptidoglycan, from either the reducing or the non-reducing ends of the peptidoglycan chains, with concomitant formation of a 1,6-anhydrobond in the MurNAc residue.. Murein-degrading enzyme. May play a role in recycling of muropeptides during cell elongation and/or cell division. This is Membrane-bound lytic murein transglycosylase C from Escherichia coli O127:H6 (strain E2348/69 / EPEC).